Reading from the N-terminus, the 600-residue chain is Elongation factor 4 (600 aa).

The 183-residue stretch at 5 to 187 (KYIRNFSIIA…AIVNKLPPPK (183 aa)) folds into the tr-type G domain. GTP contacts are provided by residues 17–22 (DHGKST) and 134–137 (NKLD).

The protein belongs to the TRAFAC class translation factor GTPase superfamily. Classic translation factor GTPase family. LepA subfamily.

It is found in the cell inner membrane. The catalysed reaction is GTP + H2O = GDP + phosphate + H(+). In terms of biological role, required for accurate and efficient protein synthesis under certain stress conditions. May act as a fidelity factor of the translation reaction, by catalyzing a one-codon backward translocation of tRNAs on improperly translocated ribosomes. Back-translocation proceeds from a post-translocation (POST) complex to a pre-translocation (PRE) complex, thus giving elongation factor G a second chance to translocate the tRNAs correctly. Binds to ribosomes in a GTP-dependent manner. The protein is Elongation factor 4 of Rickettsia conorii (strain ATCC VR-613 / Malish 7).